The primary structure comprises 37 residues: U4-theraphotoxin-Hhn1v (37 aa).

3 cysteine pairs are disulfide-bonded: C3–C17, C7–C28, and C22–C33.

The protein belongs to the neurotoxin 12 (Hwtx-2) family. 02 (Hwtx-2) subfamily. Expressed by the venom gland.

The protein localises to the secreted. In terms of biological role, postsynaptic neurotoxin. In Cyriopagopus hainanus (Chinese bird spider), this protein is U4-theraphotoxin-Hhn1v.